Here is a 196-residue protein sequence, read N- to C-terminus: HTH-type transcriptional regulator BetI (196 aa).

The 61-residue stretch at 8 to 68 folds into the HTH tetR-type domain; it reads PVRREQLIRA…AAMRQILREL (61 aa). The segment at residues 31–50 is a DNA-binding region (H-T-H motif); that stretch reads TVATIAKKAGLSSGIVAHYF.

The protein operates within amine and polyamine biosynthesis; betaine biosynthesis via choline pathway [regulation]. Functionally, repressor involved in the biosynthesis of the osmoprotectant glycine betaine. It represses transcription of the choline transporter BetT and the genes of BetAB involved in the synthesis of glycine betaine. In Stenotrophomonas maltophilia (strain R551-3), this protein is HTH-type transcriptional regulator BetI.